Consider the following 33-residue polypeptide: Nigrocin-1 (33 aa).

A disulfide bridge connects residues cysteine 27 and cysteine 33.

This sequence belongs to the frog skin active peptide (FSAP) family. Brevinin subfamily. In terms of tissue distribution, expressed by the skin dorsal glands.

It localises to the secreted. Shows antibacterial activity against both Gram-positive and Gram-negative bacteria and against the fungus C.albicans. Has no hemolytic activity. This is Nigrocin-1 from Pelophylax nigromaculatus (Black-spotted frog).